A 161-amino-acid polypeptide reads, in one-letter code: Ferredoxin/F(420)H(2)-dependent CoB-CoM heterodisulfide reductase subunit C (161 aa).

2 consecutive 4Fe-4S ferredoxin-type domains span residues 10–40 (KAEGLDLLSCMHCGICTGSCPSGRHTGLNTR) and 51–82 (AAVLSDYDLWLCTTCYTCQERCPRGIPITDAI). Residues cysteine 19, cysteine 22, cysteine 25, cysteine 29, cysteine 62, cysteine 65, cysteine 68, and cysteine 72 each coordinate [4Fe-4S] cluster.

The protein belongs to the HdrC family. In terms of assembly, the ferredoxin/F(420)H(2)-dependent CoB-CoM heterodisulfide reductase is composed of three subunits; HdrA2, HdrB2 and HdrC2. The cofactor is [4Fe-4S] cluster.

It is found in the cytoplasm. It carries out the reaction coenzyme B + coenzyme M + 2 oxidized [2Fe-2S]-[ferredoxin] = coenzyme M-coenzyme B heterodisulfide + 2 reduced [2Fe-2S]-[ferredoxin] + 2 H(+). The catalysed reaction is coenzyme B + 2 oxidized coenzyme F420-(gamma-L-Glu)(n) + coenzyme M + 2 reduced [2Fe-2S]-[ferredoxin] + 4 H(+) = coenzyme M-coenzyme B heterodisulfide + 2 reduced coenzyme F420-(gamma-L-Glu)(n) + 2 oxidized [2Fe-2S]-[ferredoxin]. Its pathway is cofactor metabolism; coenzyme M-coenzyme B heterodisulfide reduction; coenzyme B and coenzyme M from coenzyme M-coenzyme B heterodisulfide: step 1/1. Part of a complex that catalyzes the reversible reduction of CoM-S-S-CoB to the thiol-coenzymes H-S-CoM (coenzyme M) and H-S-CoB (coenzyme B). Catalyzes the transfer of electrons from ferredoxin to CoM-S-S-CoB during methanogenesis from acetate. Electrons transfer from ferredoxin to CoM-S-S-CoB via HdrA2, HdrC2 and HdrB2. In addition, the complex can use electron bifurcation to direct electron pairs from reduced coenzyme F420 towards the reduction of both ferredoxin and CoB-CoM heterodisulfide. This activity may take place during Fe(III)-dependent anaerobic methane oxidation. The sequence is that of Ferredoxin/F(420)H(2)-dependent CoB-CoM heterodisulfide reductase subunit C from Methanosarcina acetivorans (strain ATCC 35395 / DSM 2834 / JCM 12185 / C2A).